Here is a 45-residue protein sequence, read N- to C-terminus: Photosystem II reaction center protein K (45 aa).

A propeptide spanning residues 1–8 (MEAALLLA) is cleaved from the precursor. A helical transmembrane segment spans residues 24–44 (LPVIPVFFLLLAFVWQAAVGF).

Belongs to the PsbK family. In terms of assembly, PSII is composed of 1 copy each of membrane proteins PsbA, PsbB, PsbC, PsbD, PsbE, PsbF, PsbH, PsbI, PsbJ, PsbK, PsbL, PsbM, PsbT, PsbX, PsbY, PsbZ, Psb30/Ycf12, peripheral proteins PsbO, CyanoQ (PsbQ), PsbU, PsbV and a large number of cofactors. It forms dimeric complexes.

The protein localises to the cellular thylakoid membrane. In terms of biological role, one of the components of the core complex of photosystem II (PSII). PSII is a light-driven water:plastoquinone oxidoreductase that uses light energy to abstract electrons from H(2)O, generating O(2) and a proton gradient subsequently used for ATP formation. It consists of a core antenna complex that captures photons, and an electron transfer chain that converts photonic excitation into a charge separation. This is Photosystem II reaction center protein K from Synechococcus elongatus (strain ATCC 33912 / PCC 7942 / FACHB-805) (Anacystis nidulans R2).